The primary structure comprises 77 residues: Chassatide C13 (77 aa).

A signal peptide spans 1-24 (MAKFATQLLLFVLIASLVMLEVHA). Residues 25 to 44 (SNTFQVPDLGKRLLMNRDPN) constitute a propeptide, removed in mature form. Residues 45-75 (GFPCAESCVYIPCTVTALLGCSCRNRVCYRN) constitute a cross-link (cyclopeptide (Gly-Asn)). 3 cysteine pairs are disulfide-bonded: C48/C65, C52/C67, and C57/C72. The propeptide at 76–77 (EL) is removed in mature form.

In terms of processing, this is a cyclic peptide. In terms of tissue distribution, expressed in fruit and pedicel but not in root, leaf and stem (at protein level).

Functionally, probably participates in a plant defense mechanism. The polypeptide is Chassatide C13 (Chassalia chartacea (Chassalia curviflora)).